We begin with the raw amino-acid sequence, 714 residues long: Polyribonucleotide nucleotidyltransferase (714 aa).

Mg(2+)-binding residues include D489 and D495. The 60-residue stretch at 556–615 (PKIDTIKIDVDKIKVVIGKGGETIDKIIAETGVKIDIDEEGNVSIYSSDQDAINRAKEII) folds into the KH domain. The S1 motif domain maps to 625-693 (GEVYHAKVVR…DKGRIDASMK (69 aa)). A disordered region spans residues 691-714 (SMKALVPRPPKPEKSEAKKEGKHD). Positions 700–714 (PKPEKSEAKKEGKHD) are enriched in basic and acidic residues.

Belongs to the polyribonucleotide nucleotidyltransferase family. The cofactor is Mg(2+).

It localises to the cytoplasm. It carries out the reaction RNA(n+1) + phosphate = RNA(n) + a ribonucleoside 5'-diphosphate. Its function is as follows. Involved in mRNA degradation. Catalyzes the phosphorolysis of single-stranded polyribonucleotides processively in the 3'- to 5'-direction. The chain is Polyribonucleotide nucleotidyltransferase from Streptococcus equi subsp. zooepidemicus (strain MGCS10565).